Reading from the N-terminus, the 603-residue chain is UvrABC system protein C (603 aa).

In terms of domain architecture, GIY-YIG spans 15-92; that stretch reads DQPGCYLMKD…IKKHDPRFNI (78 aa). The UVR domain maps to 197–232; it reads KTVKNDLMKKMQEAAENMEFEKAGEFRDQINAIETT.

The protein belongs to the UvrC family. In terms of assembly, interacts with UvrB in an incision complex.

It is found in the cytoplasm. In terms of biological role, the UvrABC repair system catalyzes the recognition and processing of DNA lesions. UvrC both incises the 5' and 3' sides of the lesion. The N-terminal half is responsible for the 3' incision and the C-terminal half is responsible for the 5' incision. This chain is UvrABC system protein C, found in Listeria innocua serovar 6a (strain ATCC BAA-680 / CLIP 11262).